Reading from the N-terminus, the 347-residue chain is Holliday junction branch migration complex subunit RuvB (347 aa).

Residues 4–184 (QDRIVDGHAS…FGIVQRLEFY (181 aa)) are large ATPase domain (RuvB-L). ATP-binding positions include R24, G65, K68, T69, T70, 131 to 133 (EDF), R174, Y184, and R221. T69 contributes to the Mg(2+) binding site. The interval 185-255 (SVQDLTHIVK…IADSALNMLN (71 aa)) is small ATPAse domain (RuvB-S). The tract at residues 258–347 (HHGFDHMDRR…SQQQDSLPGI (90 aa)) is head domain (RuvB-H). The DNA site is built by R294, R313, and R318.

This sequence belongs to the RuvB family. Homohexamer. Forms an RuvA(8)-RuvB(12)-Holliday junction (HJ) complex. HJ DNA is sandwiched between 2 RuvA tetramers; dsDNA enters through RuvA and exits via RuvB. An RuvB hexamer assembles on each DNA strand where it exits the tetramer. Each RuvB hexamer is contacted by two RuvA subunits (via domain III) on 2 adjacent RuvB subunits; this complex drives branch migration. In the full resolvosome a probable DNA-RuvA(4)-RuvB(12)-RuvC(2) complex forms which resolves the HJ.

It localises to the cytoplasm. It catalyses the reaction ATP + H2O = ADP + phosphate + H(+). The RuvA-RuvB-RuvC complex processes Holliday junction (HJ) DNA during genetic recombination and DNA repair, while the RuvA-RuvB complex plays an important role in the rescue of blocked DNA replication forks via replication fork reversal (RFR). RuvA specifically binds to HJ cruciform DNA, conferring on it an open structure. The RuvB hexamer acts as an ATP-dependent pump, pulling dsDNA into and through the RuvAB complex. RuvB forms 2 homohexamers on either side of HJ DNA bound by 1 or 2 RuvA tetramers; 4 subunits per hexamer contact DNA at a time. Coordinated motions by a converter formed by DNA-disengaged RuvB subunits stimulates ATP hydrolysis and nucleotide exchange. Immobilization of the converter enables RuvB to convert the ATP-contained energy into a lever motion, pulling 2 nucleotides of DNA out of the RuvA tetramer per ATP hydrolyzed, thus driving DNA branch migration. The RuvB motors rotate together with the DNA substrate, which together with the progressing nucleotide cycle form the mechanistic basis for DNA recombination by continuous HJ branch migration. Branch migration allows RuvC to scan DNA until it finds its consensus sequence, where it cleaves and resolves cruciform DNA. The chain is Holliday junction branch migration complex subunit RuvB from Teredinibacter turnerae (strain ATCC 39867 / T7901).